A 292-amino-acid chain; its full sequence is BTB/POZ domain-containing protein KCTD7 (292 aa).

A disordered region spans residues Met-1–Tyr-27. A BTB domain is found at Ile-56–Leu-144.

It is found in the cell membrane. The protein resides in the cytoplasm. The protein localises to the cytosol. The protein is BTB/POZ domain-containing protein KCTD7 (kctd7) of Danio rerio (Zebrafish).